Here is a 248-residue protein sequence, read N- to C-terminus: uncharacterized protein (248 aa).

Residues 104–122 (CDVAACVGATWIAGGFAGA) form a helical membrane-spanning segment.

It is found in the membrane. This is an uncharacterized protein from Escherichia coli (strain K12).